The primary structure comprises 233 residues: Lipid A 4'-phosphatase (233 aa).

Position 1 (Met-1) is a topological domain, cytoplasmic. The chain crosses the membrane as a helical span at residues 2–22 (LLFWMWWALLAVFRAFPGIDI). Residues 23–60 (YFSQLFFVGADCDATAAAGNICGGFPYRDVAAFDLLRT) lie on the Extracellular side of the membrane. Residues 61–81 (VFFRLPYVVAIVMVWKLVECY) form a helical membrane-spanning segment. Topologically, residues 82-94 (QQHGATFNAERAQ) are cytoplasmic. The helical transmembrane segment at 95–115 (KLKVALGTLLIGPVLLVNVVL) threads the bilayer. At 116-149 (KEHWGRPRPIQTDIFGGALHFAEAGSLAGKCVSN) the chain is on the extracellular side. The helical transmembrane segment at 150–170 (CSFVSGEAASAGWLFCLLLFV) threads the bilayer. The Cytoplasmic segment spans residues 171 to 176 (PKSLRY). Residues 177–197 (AVAAPLAAISILTPAMRLSFG) traverse the membrane as a helical segment. At 198–200 (AHY) the chain is on the extracellular side. A helical membrane pass occupies residues 201–221 (LSDVVLGWLSSLVVFAALLAL). Topologically, residues 222-233 (TESQQHQKNSEI) are cytoplasmic.

It belongs to the lipid A LpxF 4'-phosphatase family.

The protein localises to the cell inner membrane. The protein operates within bacterial outer membrane biogenesis; LPS lipid A biosynthesis. Its function is as follows. Removes the 4'-phosphate moiety from lipid IV(A) (a tetraacylated precursor of lipid A). The protein is Lipid A 4'-phosphatase of Rhizobium leguminosarum.